We begin with the raw amino-acid sequence, 928 residues long: Protein NETWORKED 2B (928 aa).

The NAB domain occupies 10-90 (YSWWWASHIR…ERYDHLSTEL (81 aa)). A disordered region spans residues 108–144 (PLVDDDDDDDDDNPKKPPKHLHLIPSGTNIPQVPEVP). The span at 110–119 (VDDDDDDDDD) shows a compositional bias: acidic residues. Coiled coils occupy residues 207-309 (SYEQ…AKKA) and 360-445 (ALLK…VKMD). Disordered regions lie at residues 447-472 (DVEG…SISN) and 489-529 (KQSR…EERR). The span at 457–468 (DIQEEDTVEDSD) shows a compositional bias: acidic residues. Positions 489-506 (KQSRDQESMQEEKSETRD) are enriched in basic and acidic residues. Positions 547 to 574 (LLDEYSSVLRDYREVKRKLSEVEKKNRD) form a coiled coil. The disordered stretch occupies residues 620 to 651 (AESVSISHSSNSSFSMPPLPQRGDLKRASEQE). Residues 622–634 (SVSISHSSNSSFS) are compositionally biased toward low complexity. A compositionally biased stretch (basic and acidic residues) spans 642–651 (GDLKRASEQE).

Belongs to the NET family.

Its function is as follows. Plant-specific actin binding protein. May be part of a membrane-cytoskeletal adapter complex. The chain is Protein NETWORKED 2B from Arabidopsis thaliana (Mouse-ear cress).